Reading from the N-terminus, the 801-residue chain is Phenylalanine--tRNA ligase beta subunit (801 aa).

The tRNA-binding domain maps to 39–153; it reads AEGLSKLVVG…EDAVPGESIF (115 aa). The region spanning 406 to 481 is the B5 domain; it reads TDDIQVSTSL…RIYGYDKLPT (76 aa). Mg(2+)-binding residues include aspartate 459, aspartate 465, glutamate 468, and glutamate 469. The FDX-ACB domain occupies 708–801; it reads TKFPAVSRDI…LTEKVGAEVR (94 aa).

It belongs to the phenylalanyl-tRNA synthetase beta subunit family. Type 1 subfamily. Tetramer of two alpha and two beta subunits. Requires Mg(2+) as cofactor.

It is found in the cytoplasm. It catalyses the reaction tRNA(Phe) + L-phenylalanine + ATP = L-phenylalanyl-tRNA(Phe) + AMP + diphosphate + H(+). This is Phenylalanine--tRNA ligase beta subunit from Streptococcus mutans serotype c (strain ATCC 700610 / UA159).